Consider the following 139-residue polypeptide: Large ribosomal subunit protein uL16 (139 aa).

Belongs to the universal ribosomal protein uL16 family. As to quaternary structure, part of the 50S ribosomal subunit.

Functionally, binds 23S rRNA and is also seen to make contacts with the A and possibly P site tRNAs. This chain is Large ribosomal subunit protein uL16, found in Koribacter versatilis (strain Ellin345).